A 277-amino-acid chain; its full sequence is Large ribosomal subunit protein uL2 (277 aa).

2 disordered regions span residues 24-55 (ITTS…RHHG) and 221-277 (RGSV…RKKK).

It belongs to the universal ribosomal protein uL2 family. In terms of assembly, part of the 50S ribosomal subunit. Forms a bridge to the 30S subunit in the 70S ribosome.

Its function is as follows. One of the primary rRNA binding proteins. Required for association of the 30S and 50S subunits to form the 70S ribosome, for tRNA binding and peptide bond formation. It has been suggested to have peptidyltransferase activity; this is somewhat controversial. Makes several contacts with the 16S rRNA in the 70S ribosome. This Listeria innocua serovar 6a (strain ATCC BAA-680 / CLIP 11262) protein is Large ribosomal subunit protein uL2.